The sequence spans 245 residues: Ribosomal RNA large subunit methyltransferase E (245 aa).

The tract at residues 1-26 (MTKPPVGSNRSGRKLGQKVKKGKLKA) is disordered. Positions 11-26 (SGRKLGQKVKKGKLKA) are enriched in basic residues. The S-adenosyl-L-methionine site is built by Gly-81, Trp-83, Asp-104, Asp-120, and Asp-144. Residue Lys-184 is the Proton acceptor of the active site.

Belongs to the class I-like SAM-binding methyltransferase superfamily. RNA methyltransferase RlmE family.

The protein localises to the cytoplasm. It catalyses the reaction uridine(2552) in 23S rRNA + S-adenosyl-L-methionine = 2'-O-methyluridine(2552) in 23S rRNA + S-adenosyl-L-homocysteine + H(+). In terms of biological role, specifically methylates the uridine in position 2552 of 23S rRNA at the 2'-O position of the ribose in the fully assembled 50S ribosomal subunit. This Sinorhizobium medicae (strain WSM419) (Ensifer medicae) protein is Ribosomal RNA large subunit methyltransferase E.